The sequence spans 394 residues: Phosphoglycerate kinase (394 aa).

Residues 21–23 (DLN), R36, 59–62 (HLGR), R113, and R146 contribute to the substrate site. ATP is bound by residues K197, E319, and 345–348 (GGDT).

Belongs to the phosphoglycerate kinase family. In terms of assembly, monomer.

It localises to the cytoplasm. It catalyses the reaction (2R)-3-phosphoglycerate + ATP = (2R)-3-phospho-glyceroyl phosphate + ADP. It functions in the pathway carbohydrate degradation; glycolysis; pyruvate from D-glyceraldehyde 3-phosphate: step 2/5. The sequence is that of Phosphoglycerate kinase from Halorhodospira halophila (strain DSM 244 / SL1) (Ectothiorhodospira halophila (strain DSM 244 / SL1)).